We begin with the raw amino-acid sequence, 161 residues long: Extracellular giant hemoglobin major globin subunit B1 (161 aa).

Positions Met1 to Ala16 are cleaved as a signal peptide. Positions Cys18–Leu161 constitute a Globin domain. Cysteines 19 and 149 form a disulfide. A heme b-binding site is contributed by His112.

Belongs to the globin family. The 400 kDa hemoglobin consists of a spherical 24-mer arranged as a double layer of dome-shaped dodecamers. Each dodecamer is composed of the 3-fold trimer of the tetramer A1-A2-B1-B2 having one intra-tetramer (A1-B2) disulfide bond and one inter-tetramer (B1-B2) disulfide bond per tetramer.

It is found in the secreted. Its function is as follows. The extracellular giant hemoglobin is able to bind and transport oxygen and sulfide simultaneously and reversibly at two different sites. The chain is Extracellular giant hemoglobin major globin subunit B1 (ghbB1) from Oligobrachia mashikoi (Beard worm).